A 462-amino-acid chain; its full sequence is MVGSIEAKSLQSNGSVHHIGLNLEEKLDEFRRLLGKSEKDPLRIVSVGAGAWGSVFAALLQESYGGFRDKFQIRIWRRAGRAVDRETAEHLFEVINSREDILRRLIRRCAYLKYVEARLGDRTLYADEILKDGFCLNMVDTPLCPLKVVTNLQEAVWDADIVVNGLPSTETREVFEEISKYWKERITVPIIISLSKGIETALEPVPHIITPTKMIHQATGVPIDNVLYLGGPNIAAEIYNKEYANARICGAAKWRKPLAKFLRQPHFIVWDNSDLVTHEVMGGLKNVYAIGAGMVAALTNESATSKSVYFAHCTSEMIFITHLLAEEPEKLAGPLLADTYVTLLKGRNAWYGQMLAKGEINRDMGDSISGKGMIQGVSAVGAFYQLLSQSSLSILPSEEKKPVAPVESCPILKTLYKILITREQSTQAILQALRDETLNDPRDRIEIAQSHAFYRPSLLGQP.

Residues Gly-48–Gly-53, Lys-196, and Ala-235 contribute to the NAD(+) site. Lys-196 is a binding site for substrate. The active-site Proton acceptor is Lys-285. Arg-347 and Gln-375 together coordinate NAD(+). Arg-347–Asn-348 is a substrate binding site.

This sequence belongs to the NAD-dependent glycerol-3-phosphate dehydrogenase family. Expressed in roots, leaves, flowers and siliques.

The protein resides in the cytoplasm. Its subcellular location is the cytosol. It carries out the reaction sn-glycerol 3-phosphate + NAD(+) = dihydroxyacetone phosphate + NADH + H(+). Functionally, involved in cell redox homeostasis. Required for maintaining a steady state cellular NADH/NAD(+) ratio through a mitochondrial glycerol-3-phosphate redox shuttle. May function with the mitochondrial FAD-dependent glycerol-3-phosphate dehydrogenase SDP6 to shuttle reducing equivalents into the mitochondria for respiration. The protein is Glycerol-3-phosphate dehydrogenase [NAD(+)] GPDHC1, cytosolic (GPDHC1) of Arabidopsis thaliana (Mouse-ear cress).